Consider the following 94-residue polypeptide: Large ribosomal subunit protein eL36 (94 aa).

Positions 1 to 25 are enriched in basic residues; it reads MKNAYKKVRVRYPVKRPDVKRKQRG. The segment at 1 to 30 is disordered; sequence MKNAYKKVRVRYPVKRPDVKRKQRGPRAET.

The protein belongs to the eukaryotic ribosomal protein eL36 family. In terms of assembly, component of the large ribosomal subunit.

It localises to the cytoplasm. This chain is Large ribosomal subunit protein eL36 (RPL36), found in Encephalitozoon cuniculi (strain GB-M1) (Microsporidian parasite).